Reading from the N-terminus, the 182-residue chain is MNKQPEEWQDPQSLQQQDDEQDEIIWVSKSEIKRDAETLKQLGVELVSLGKNALEKIPLDDDLRCAIALAQRIKREGQRRQIQLIGKMLRARDPEPIQQALDKLKNRHNQQITLFHKLEILRDKLLAQGDDAIAQVLEHYPQADRQQLRALVRNAQKEKAAKKPPKTARQLYQYLHTLSEAD.

The interval 1-20 (MNKQPEEWQDPQSLQQQDDE) is disordered.

This sequence belongs to the DarP family.

The protein resides in the cytoplasm. Member of a network of 50S ribosomal subunit biogenesis factors which assembles along the 30S-50S interface, preventing incorrect 23S rRNA structures from forming. Promotes peptidyl transferase center (PTC) maturation. In Sodalis glossinidius (strain morsitans), this protein is Dual-action ribosomal maturation protein DarP.